We begin with the raw amino-acid sequence, 298 residues long: Tyrosine recombinase XerC (298 aa).

In terms of domain architecture, Core-binding (CB) spans 2–88 (TDLHTDVERY…ALRSFFDWLV (87 aa)). The region spanning 109 to 288 (HLPKNIDVDD…DFQHLASVYD (180 aa)) is the Tyr recombinase domain. Catalysis depends on residues arginine 148, lysine 172, histidine 240, arginine 243, and histidine 266. Tyrosine 275 serves as the catalytic O-(3'-phospho-DNA)-tyrosine intermediate.

Belongs to the 'phage' integrase family. XerC subfamily. In terms of assembly, forms a cyclic heterotetrameric complex composed of two molecules of XerC and two molecules of XerD, in which XerC interacts with XerD via its C-terminal region, XerD interacts with XerC via its C-terminal region and so on.

The protein localises to the cytoplasm. Its activity is regulated as follows. FtsK may regulate the catalytic switch between XerC and XerD in the heterotetrameric complex during the two steps of the recombination process. In terms of biological role, site-specific tyrosine recombinase, which acts by catalyzing the cutting and rejoining of the recombining DNA molecules. Binds cooperatively to specific DNA consensus sequences that are separated from XerD binding sites by a short central region, forming the heterotetrameric XerC-XerD complex that recombines DNA substrates. The complex is essential to convert dimers of the bacterial chromosome into monomers to permit their segregation at cell division. It also contributes to the segregational stability of plasmids. In the complex XerC specifically exchanges the top DNA strands. The protein is Tyrosine recombinase XerC of Escherichia coli (strain 55989 / EAEC).